We begin with the raw amino-acid sequence, 194 residues long: Holliday junction branch migration complex subunit RuvA (194 aa).

The tract at residues 1 to 64 (MISSLNGILE…EDALSLFGFA (64 aa)) is domain I. A domain II region spans residues 65 to 143 (TTEELSLFET…KNWEAGVLSQ (79 aa)). The interval 144 to 149 (VTEANS) is flexible linker. Residues 149 to 194 (SDILATLTALGYSSSEAAKAISSLGDNGDLPLEERIKLALNYFNNK) form a domain III region.

Belongs to the RuvA family. As to quaternary structure, homotetramer. Forms an RuvA(8)-RuvB(12)-Holliday junction (HJ) complex. HJ DNA is sandwiched between 2 RuvA tetramers; dsDNA enters through RuvA and exits via RuvB. An RuvB hexamer assembles on each DNA strand where it exits the tetramer. Each RuvB hexamer is contacted by two RuvA subunits (via domain III) on 2 adjacent RuvB subunits; this complex drives branch migration. In the full resolvosome a probable DNA-RuvA(4)-RuvB(12)-RuvC(2) complex forms which resolves the HJ.

It localises to the cytoplasm. The RuvA-RuvB-RuvC complex processes Holliday junction (HJ) DNA during genetic recombination and DNA repair, while the RuvA-RuvB complex plays an important role in the rescue of blocked DNA replication forks via replication fork reversal (RFR). RuvA specifically binds to HJ cruciform DNA, conferring on it an open structure. The RuvB hexamer acts as an ATP-dependent pump, pulling dsDNA into and through the RuvAB complex. HJ branch migration allows RuvC to scan DNA until it finds its consensus sequence, where it cleaves and resolves the cruciform DNA. The protein is Holliday junction branch migration complex subunit RuvA of Dehalococcoides mccartyi (strain CBDB1).